A 159-amino-acid polypeptide reads, in one-letter code: Transcription elongation factor GreA (159 aa).

The protein belongs to the GreA/GreB family.

Functionally, necessary for efficient RNA polymerase transcription elongation past template-encoded arresting sites. The arresting sites in DNA have the property of trapping a certain fraction of elongating RNA polymerases that pass through, resulting in locked ternary complexes. Cleavage of the nascent transcript by cleavage factors such as GreA or GreB allows the resumption of elongation from the new 3'terminus. GreA releases sequences of 2 to 3 nucleotides. In Buchnera aphidicola subsp. Baizongia pistaciae (strain Bp), this protein is Transcription elongation factor GreA.